A 453-amino-acid polypeptide reads, in one-letter code: Tubulin alpha chain (453 aa).

GTP is bound at residue Gln-11. Residue Lys-40 is modified to N6-acetyllysine. GTP contacts are provided by Glu-71, Gly-144, Thr-145, Thr-179, Asn-206, and Asn-228. Glu-71 lines the Mg(2+) pocket. The active site involves Glu-254.

Belongs to the tubulin family. In terms of assembly, dimer of alpha and beta chains. A typical microtubule is a hollow water-filled tube with an outer diameter of 25 nm and an inner diameter of 15 nM. Alpha-beta heterodimers associate head-to-tail to form protofilaments running lengthwise along the microtubule wall with the beta-tubulin subunit facing the microtubule plus end conferring a structural polarity. Microtubules usually have 13 protofilaments but different protofilament numbers can be found in some organisms and specialized cells. Mg(2+) serves as cofactor. Undergoes a tyrosination/detyrosination cycle, the cyclic removal and re-addition of a C-terminal tyrosine residue by the enzymes tubulin tyrosine carboxypeptidase (TTCP) and tubulin tyrosine ligase (TTL), respectively. In terms of processing, acetylation of alpha chains at Lys-40 stabilizes microtubules and affects affinity and processivity of microtubule motors. This modification has a role in multiple cellular functions, ranging from cell motility, cell cycle progression or cell differentiation to intracellular trafficking and signaling.

The protein localises to the cytoplasm. It is found in the cytoskeleton. It catalyses the reaction GTP + H2O = GDP + phosphate + H(+). Functionally, tubulin is the major constituent of microtubules, a cylinder consisting of laterally associated linear protofilaments composed of alpha- and beta-tubulin heterodimers. Microtubules grow by the addition of GTP-tubulin dimers to the microtubule end, where a stabilizing cap forms. Below the cap, tubulin dimers are in GDP-bound state, owing to GTPase activity of alpha-tubulin. The polypeptide is Tubulin alpha chain (Plasmodium falciparum (isolate K1 / Thailand)).